A 767-amino-acid chain; its full sequence is Protein transport protein Sec23B (767 aa).

Position 2 is an N-acetylalanine (A2). Positions 61, 66, 85, and 88 each coordinate Zn(2+). At K564 the chain carries N6-acetyllysine. One copy of the Gelsolin-like repeat lies at 634–720 (PEPVLLDSSS…EHGGSQARFL (87 aa)).

The protein belongs to the SEC23/SEC24 family. SEC23 subfamily. COPII is composed of at least five proteins: the Sec23/24 complex, the Sec13/31 complex and Sar1. Interacts with SAR1A.

Its subcellular location is the cytoplasmic vesicle. It is found in the COPII-coated vesicle membrane. The protein localises to the endoplasmic reticulum membrane. The protein resides in the cytoplasm. It localises to the cytosol. In terms of biological role, component of the coat protein complex II (COPII) which promotes the formation of transport vesicles from the endoplasmic reticulum (ER). The coat has two main functions, the physical deformation of the endoplasmic reticulum membrane into vesicles and the selection of cargo molecules for their transport to the Golgi complex. This chain is Protein transport protein Sec23B, found in Mus musculus (Mouse).